Here is a 490-residue protein sequence, read N- to C-terminus: 5'-3' exonuclease PLD3 (490 aa).

The Cytoplasmic portion of the chain corresponds to 1 to 38; that stretch reads MKPKLMYQELKVPAEEPASELPMNEIEAWKAAEKKARW. The chain crosses the membrane as a helical; Signal-anchor for type II membrane protein span at residues 39-59; the sequence is VLLVLILAVVGFGALMTQLFL. The Lumenal portion of the chain corresponds to 60 to 490; it reads WEYGDLHLFG…DSVGNACRLL (431 aa). Intrachain disulfides connect cysteine 77–cysteine 239 and cysteine 81–cysteine 237. Asparagine 97 and asparagine 132 each carry an N-linked (GlcNAc...) asparagine glycan. The 28-residue stretch at 196–223 folds into the PLD phosphodiesterase 1 domain; sequence THGVLHTKFWVVDQTHFYLGSANMDWRS. Catalysis depends on residues histidine 201, lysine 203, and aspartate 208. The Proton donor role is filled by histidine 201. Phosphate-binding residues include histidine 201 and lysine 203. Asparagine 218 is a phosphate binding site. 3 N-linked (GlcNAc...) asparagine glycosylation sites follow: asparagine 236, asparagine 284, and asparagine 387. Cysteine 366 and cysteine 487 are oxidised to a cystine. In terms of domain architecture, PLD phosphodiesterase 2 spans 411-437; it reads YARVNHNKYMVTERATYIGTSNWSGSY. Histidine 416 lines the phosphate pocket. Histidine 416 (nucleophile) is an active-site residue. Position 438 (phenylalanine 438) interacts with Mg(2+).

This sequence belongs to the phospholipase D family. As to quaternary structure, homodimer. Interacts with APP. Post-translationally, N-glycosylated. In terms of processing, proteolytically processed to a soluble form that is stable within endosomes and lysosomes. During transport through the secretory pathway becomes proteolysed by cysteine proteases, thereby releasing a stable soluble lysosomal lumenal polypeptide, whereas the transmembrane-bound fragment is rapidly degraded. Its transport route to lysosomes involves ubiquitination and the ESCRT complex. Ubiquitinated. Ubiquitination mediates sorting into lysosomes.

It is found in the endoplasmic reticulum membrane. The protein localises to the lysosome lumen. Its subcellular location is the early endosome membrane. The protein resides in the late endosome membrane. It localises to the golgi apparatus membrane. It is found in the endosome membrane. It catalyses the reaction Exonucleolytic cleavage in the 5'- to 3'-direction to yield nucleoside 3'-phosphates.. It carries out the reaction a 5'-end 5'-dephospho-ribonucleotidyl-ribonucleotide-RNA + H2O = a ribonucleoside 3'-phosphate + a 5'-end dephospho-ribonucleoside-RNA + H(+). The enzyme catalyses a ribonucleoside 3'-phosphate-2'-3'-cyclophospho-GMP + H2O = a ribonucleoside 3'-phosphate + 2',3'-cyclophospho-GMP + H(+). The catalysed reaction is a 5'-end 5'-dephospho-2'-deoxyribonucleotidyl-2'-deoxyribonucleotide in single-stranded DNA + H2O = a 5'-end dephospho-2'-deoxyribonucleoside in single-stranded DNA + a 2'-deoxyribonucleoside 3'-phosphate + H(+). It catalyses the reaction a 5'-end 5'-phospho-2'-deoxyribonucleotide in single-stranded DNA + H2O = a 5'-end 5'-dephospho-2'-deoxyribonucleotide in single-stranded DNA + phosphate. It carries out the reaction a 3-lyso-sn-glycero-1-phospho-(3'-acyl-1'-sn-glycerol) + a 1-acyl-sn-glycerol = a 3-acyl-sn-glycero-1-phospho-(3'-acyl-1'-sn-glycerol) + glycerol. The enzyme catalyses 3-lyso-sn-glycero-1-phospho-(3'-(9Z-octadecenoyl)-1'-sn-glycerol) + 1-(9Z-octadecenoyl)-sn-glycerol = 3-(9Z-octadecenoyl)-sn-glycero-1-phospho-(3'-(9Z-octadecenoyl)-1'-sn-glycerol) + glycerol. Functionally, 5'-&gt;3' exonuclease that hydrolyzes the phosphodiester bond of single-stranded DNA (ssDNA) and RNA molecules to form nucleoside 3'-monophosphates and 5'-end 5'-hydroxy deoxyribonucleotide/ribonucleotide fragments. Partially redundant with PLD4, can cleave all four nucleotides displaying higher efficiency for ssDNA and RNA fragments initiated with uridine and guanosine residues and lower efficiency for cytidine-initiated substrates. As a result, it does not always degrade polynucleotides to the single nucleotide level, it can stall at specific sites sparing certain fragments from exonucleolytic degradation. Processes self and pathogenic ssDNA and RNA molecules that reach the endolysosomal compartment via phagocytosis or autophagy and may serve as 'danger' signals for recognition by innate immune receptors such as toll-like receptors (TLRs). Degrades mitochondrial CpG-rich ssDNA fragments to prevent TLR9 activation and autoinflammatory response, but it can cleave viral RNA to generate ligands for TLR7 activation and initiate antiviral immune responses. In plasmacytoid dendritic cells, it cooperates with endonuclease RNASET2 to release 2',3'-cyclic guanosine monophosphate (2',3'-cGMP), a potent stimulatory ligand for TLR7. Produces 2',3'-cGMPs and cytidine-rich RNA fragments that occupy TLR7 ligand-binding pockets and trigger a signaling-competent state. Can exert polynucleotide phosphatase activity toward 5'-phosphorylated ssDNA substrates although at a slow rate. Transphosphatidylase that catalyzes the exchange with R to S stereo-inversion of the glycerol moiety between (S,R)-lysophosphatidylglycerol (LPG) and monoacylglycerol (MAG) substrates to yield (S,S)-bis(monoacylglycero)phosphate (BMP). Can synthesize a variety of (S,S)-BMPs representing the main phospholipid constituent of lysosomal intralumenal vesicle (ILV) membranes that bind acid hydrolases for lipid degradation. Regulates the homeostasis and interorganellar communication of the endolysosomal system with an overall impact on cellular removal of dysfunctional organelles via autophagy as well as proper protein and lipid turnover. May play a role in myotube formation in response to ER stress. The protein is 5'-3' exonuclease PLD3 (PLD3) of Bos taurus (Bovine).